The primary structure comprises 136 residues: Keratin-associated protein 15-1 (136 aa).

It belongs to the PMG family. As to quaternary structure, interacts with hair keratins.

Functionally, in the hair cortex, hair keratin intermediate filaments are embedded in an interfilamentous matrix, consisting of hair keratin-associated proteins (KRTAP), which are essential for the formation of a rigid and resistant hair shaft through their extensive disulfide bond cross-linking with abundant cysteine residues of hair keratins. The matrix proteins include the high-sulfur and high-glycine-tyrosine keratins. This chain is Keratin-associated protein 15-1 (KRTAP15-1), found in Capra hircus (Goat).